Reading from the N-terminus, the 222-residue chain is MRLILLGAPGAGKGTQAKFICEKFGIPQISTGDMLRAAVKAGTPLGIEAKKVMDAGGLVSDDIIIGLVKDRLQQPDCKNGYLFDGFPRTIPQAEAMKDAAVAIDYVLEIDVPFDAIIERMSGRRVHVASGRTYHVKYNPPKTEGVDDESGEPLIQRDDDKEDTVRKRLDVYENQTRPLVDYYSQWAANGNSAAKVAPPKYRKISGVGNVDEITARVFGALQD.

10–15 contributes to the ATP binding site; it reads GAGKGT. Residues 30–59 form an NMP region; that stretch reads STGDMLRAAVKAGTPLGIEAKKVMDAGGLV. Residues Thr31, Arg36, 57–59, 85–88, and Gln92 each bind AMP; these read GLV and GFPR. The LID stretch occupies residues 122-159; that stretch reads GRRVHVASGRTYHVKYNPPKTEGVDDESGEPLIQRDDD. Residues Arg123 and 132 to 133 each bind ATP; that span reads TY. The interval 138–160 is disordered; it reads NPPKTEGVDDESGEPLIQRDDDK. Residues Arg156 and Arg167 each contribute to the AMP site. Gly207 provides a ligand contact to ATP.

It belongs to the adenylate kinase family. Monomer.

Its subcellular location is the cytoplasm. It carries out the reaction AMP + ATP = 2 ADP. The protein operates within purine metabolism; AMP biosynthesis via salvage pathway; AMP from ADP: step 1/1. In terms of biological role, catalyzes the reversible transfer of the terminal phosphate group between ATP and AMP. Plays an important role in cellular energy homeostasis and in adenine nucleotide metabolism. This Ralstonia pickettii (strain 12J) protein is Adenylate kinase.